The following is a 217-amino-acid chain: 3,4-dihydroxy-2-butanone 4-phosphate synthase (217 aa).

D-ribulose 5-phosphate contacts are provided by residues 37 to 38, aspartate 42, 150 to 154, and glutamate 174; these read RE and RGGHT. Residue glutamate 38 coordinates Mg(2+). Histidine 153 provides a ligand contact to Mg(2+).

The protein belongs to the DHBP synthase family. In terms of assembly, homodimer. It depends on Mg(2+) as a cofactor. Mn(2+) is required as a cofactor.

It carries out the reaction D-ribulose 5-phosphate = (2S)-2-hydroxy-3-oxobutyl phosphate + formate + H(+). Its pathway is cofactor biosynthesis; riboflavin biosynthesis; 2-hydroxy-3-oxobutyl phosphate from D-ribulose 5-phosphate: step 1/1. Functionally, catalyzes the conversion of D-ribulose 5-phosphate to formate and 3,4-dihydroxy-2-butanone 4-phosphate. In Escherichia coli O127:H6 (strain E2348/69 / EPEC), this protein is 3,4-dihydroxy-2-butanone 4-phosphate synthase.